A 217-amino-acid chain; its full sequence is Small ribosomal subunit protein uS3 (217 aa).

Residues 40–110 enclose the KH type-2 domain; the sequence is IRDLINNSFN…EVYINIHEVR (71 aa).

It belongs to the universal ribosomal protein uS3 family. In terms of assembly, part of the 30S ribosomal subunit. Forms a tight complex with proteins S10 and S14.

Binds the lower part of the 30S subunit head. Binds mRNA in the 70S ribosome, positioning it for translation. This is Small ribosomal subunit protein uS3 from Rickettsia canadensis (strain McKiel).